A 545-amino-acid polypeptide reads, in one-letter code: Thermosome subunit alpha (545 aa).

A disordered region spans residues Lys-522 to Tyr-545. Positions Gly-529–Tyr-545 are enriched in gly residues.

This sequence belongs to the TCP-1 chaperonin family. In terms of assembly, forms a Heterooligomeric complex of two stacked eight-membered rings. Post-translationally, the N-terminus is blocked.

Its function is as follows. Molecular chaperone; binds unfolded polypeptides in vitro, and has a weak ATPase activity. This Thermoplasma acidophilum (strain ATCC 25905 / DSM 1728 / JCM 9062 / NBRC 15155 / AMRC-C165) protein is Thermosome subunit alpha (thsA).